The primary structure comprises 1131 residues: DNA polymerase II large subunit (1131 aa).

This sequence belongs to the archaeal DNA polymerase II family. In terms of assembly, heterodimer of a large subunit and a small subunit.

The catalysed reaction is DNA(n) + a 2'-deoxyribonucleoside 5'-triphosphate = DNA(n+1) + diphosphate. It carries out the reaction Exonucleolytic cleavage in the 3'- to 5'-direction to yield nucleoside 5'-phosphates.. In terms of biological role, possesses two activities: a DNA synthesis (polymerase) and an exonucleolytic activity that degrades single-stranded DNA in the 3'- to 5'-direction. Has a template-primer preference which is characteristic of a replicative DNA polymerase. The protein is DNA polymerase II large subunit of Methanococcus maripaludis (strain C5 / ATCC BAA-1333).